The sequence spans 443 residues: Cyclic GMP-AMP synthase (443 aa).

S61 lines the ATP pocket. Residues D78 and D80 contribute to the active site. Position 80 (D80) interacts with Mg(2+). ATP is bound at residue N124. The active site involves D138. D138 lines the Mg(2+) pocket. L208 is an ATP binding site.

The protein belongs to the CD-NTase family. B06 subfamily. It depends on Mg(2+) as a cofactor.

It carries out the reaction GTP + ATP = 3',3'-cGAMP + 2 diphosphate. It catalyses the reaction UTP + ATP = 3',3'-cUAMP + 2 diphosphate. The catalysed reaction is 2 ATP = 3',3'-c-di-AMP + 2 diphosphate. The enzyme catalyses 2 GTP = 3',3'-c-di-GMP + 2 diphosphate. It carries out the reaction UTP + GTP = 3',3'-cGMP-UMP + 2 diphosphate. Its function is as follows. Cyclic nucleotide synthase (second messenger synthase) of a CBASS antivirus system. CBASS (cyclic oligonucleotide-based antiphage signaling system) provides immunity against bacteriophages. The CD-NTase protein (CdnB, this protein) synthesizes cyclic nucleotides in response to infection; these serve as specific second messenger signals. The signals activate a diverse range of effectors, leading to bacterial cell death and thus abortive phage infection. The effector protein for this system is membrane protein Cap15. Functionally, catalyzes the synthesis of 3',3'-cyclic GMP-AMP (3'3'-cGAMP) from GTP and ATP, a second messenger in cell signal transduction. Also makes cyclic UMP-AMP, cyclic UMP-GMP, cyclic di-AMP and cyclic-di-GMP. In terms of biological role, protects E.coli against phage infection. When the CBASS operon (cdnB-cap15) is introduced in E.coli MG1655 there is about 100-fold protection against phage T2 and about 10-fold protection against phage T5 and T6. This chain is Cyclic GMP-AMP synthase, found in Escherichia albertii.